Reading from the N-terminus, the 1091-residue chain is Constitutive coactivator of PPAR-gamma-like protein 2 (1091 aa).

Residues 35–53 (QQQHLHRQLPPAALAPGAP) are compositionally biased toward low complexity. Disordered stretches follow at residues 35 to 105 (QQQH…HPPP), 503 to 575 (NCLT…SEPH), 966 to 1010 (SRSS…QGSS), and 1037 to 1077 (VEEK…KNHV). Residue R57 is modified to Omega-N-methylarginine. The span at 82–95 (SRHHHPAHHFHHHG) shows a compositional bias: basic residues. The segment covering 532 to 544 (GSEQITEAVQQQP) has biased composition (polar residues). Positions 966–976 (SRSSRSRGSFG) are enriched in low complexity. Omega-N-methylarginine is present on R972. Residues 1062-1077 (SDDHCLPVKNGEKNHV) are compositionally biased toward basic and acidic residues.

Belongs to the constitutive coactivator of PPAR-gamma family.

The polypeptide is Constitutive coactivator of PPAR-gamma-like protein 2 (Fam120c) (Mus musculus (Mouse)).